A 372-amino-acid chain; its full sequence is MQHESPIIRRKSTRIYVGDVPIGDGAPIAVQSMTNTRTTDVEATVAQIRALEKVGADIVRVSVPTMEAAEAFKLIKQQVSVPLVADIHFDYRIALKVAEYGVDCLRINPGNIGNEERIRSVVDCARDKNIPIRIGVNGGSLEKDLQMKYGEPTPEALVESAMRHVDHLDRLNFDQFKVSVKASDVFLAVDSYRLLAKKIDQPLHLGITEAGGARAGAVKSAVGLGMLLSEGIGDTLRISLAADPVEEIKVGFDILKSLRIRSRGINFIACPSCSRQEFDVIGTVNALEQRLEDIITPMDVSIIGCVVNGPGEAEVSHLGLAGSNKKSAFYEDGKRQKERFDNNDLVNQLEAKIRAKASMMDSENRIEIKVQD.

[4Fe-4S] cluster is bound by residues Cys-270, Cys-273, Cys-305, and Glu-312.

Belongs to the IspG family. The cofactor is [4Fe-4S] cluster.

The enzyme catalyses (2E)-4-hydroxy-3-methylbut-2-enyl diphosphate + oxidized [flavodoxin] + H2O + 2 H(+) = 2-C-methyl-D-erythritol 2,4-cyclic diphosphate + reduced [flavodoxin]. It functions in the pathway isoprenoid biosynthesis; isopentenyl diphosphate biosynthesis via DXP pathway; isopentenyl diphosphate from 1-deoxy-D-xylulose 5-phosphate: step 5/6. Functionally, converts 2C-methyl-D-erythritol 2,4-cyclodiphosphate (ME-2,4cPP) into 1-hydroxy-2-methyl-2-(E)-butenyl 4-diphosphate. The sequence is that of 4-hydroxy-3-methylbut-2-en-1-yl diphosphate synthase (flavodoxin) from Vibrio parahaemolyticus serotype O3:K6 (strain RIMD 2210633).